A 142-amino-acid chain; its full sequence is Maximins y/Hv type 1 (142 aa).

The signal sequence occupies residues 1–18; it reads MNFKYIVAVSFLIASGYA. Residues 19–43 constitute a propeptide that is removed on maturation; sequence RSEENDVQSLSQREVLEEESLREIR. At Phe-68 the chain carries Phenylalanine amide. The propeptide occupies 72–121; sequence TAEDHEVMKRLEAVMRDLDSLDHPEEASERETRGFNQEEIANLFTKKEKR. Position 141 is an isoleucine amide (Ile-141).

This sequence belongs to the bombinin family. In terms of tissue distribution, expressed by the skin glands.

The protein resides in the secreted. Its function is as follows. Maximin-y shows antimicrobial activity against bacteria and against the fungus C.albicans. It has little hemolytic activity. In terms of biological role, maximin-Hv shows antimicrobial activity against bacteria and against the fungus C.albicans. Shows strong hemolytic activity. The polypeptide is Maximins y/Hv type 1 (Bombina maxima (Giant fire-bellied toad)).